Here is a 583-residue protein sequence, read N- to C-terminus: 1-deoxy-D-xylulose-5-phosphate synthase (583 aa).

Thiamine diphosphate is bound by residues histidine 74 and glycine 115 to serine 117. Residue aspartate 146 coordinates Mg(2+). Residues glycine 147–glycine 148, asparagine 175, phenylalanine 244, and glutamate 327 contribute to the thiamine diphosphate site. Asparagine 175 provides a ligand contact to Mg(2+).

The protein belongs to the transketolase family. DXPS subfamily. Homodimer. The cofactor is Mg(2+). Thiamine diphosphate is required as a cofactor.

The catalysed reaction is D-glyceraldehyde 3-phosphate + pyruvate + H(+) = 1-deoxy-D-xylulose 5-phosphate + CO2. Its pathway is metabolic intermediate biosynthesis; 1-deoxy-D-xylulose 5-phosphate biosynthesis; 1-deoxy-D-xylulose 5-phosphate from D-glyceraldehyde 3-phosphate and pyruvate: step 1/1. Its function is as follows. Catalyzes the acyloin condensation reaction between C atoms 2 and 3 of pyruvate and glyceraldehyde 3-phosphate to yield 1-deoxy-D-xylulose-5-phosphate (DXP). This chain is 1-deoxy-D-xylulose-5-phosphate synthase, found in Myxococcus xanthus (strain DK1622).